We begin with the raw amino-acid sequence, 988 residues long: UPF0182 protein MAB_3498c (988 aa).

7 helical membrane-spanning segments follow: residues 19-39 (LVAA…LVDT), 63-83 (LALF…GFGL), 114-134 (LFLI…AQSY), 176-196 (FIAA…FGGI), 211-231 (IQLI…YWLD), 260-280 (KLIL…ALVL), and 288-308 (IGLA…PLIV).

Belongs to the UPF0182 family.

The protein localises to the cell membrane. The protein is UPF0182 protein MAB_3498c of Mycobacteroides abscessus (strain ATCC 19977 / DSM 44196 / CCUG 20993 / CIP 104536 / JCM 13569 / NCTC 13031 / TMC 1543 / L948) (Mycobacterium abscessus).